The following is a 348-amino-acid chain: Phenylalanine--tRNA ligase alpha subunit (348 aa).

Glu-268 contributes to the Mg(2+) binding site.

The protein belongs to the class-II aminoacyl-tRNA synthetase family. Phe-tRNA synthetase alpha subunit type 1 subfamily. As to quaternary structure, tetramer of two alpha and two beta subunits. The cofactor is Mg(2+).

It is found in the cytoplasm. The enzyme catalyses tRNA(Phe) + L-phenylalanine + ATP = L-phenylalanyl-tRNA(Phe) + AMP + diphosphate + H(+). This is Phenylalanine--tRNA ligase alpha subunit from Bordetella bronchiseptica (strain ATCC BAA-588 / NCTC 13252 / RB50) (Alcaligenes bronchisepticus).